The sequence spans 71 residues: Pro-MCH (71 aa).

Residues 1-20 (AKMNLSSYILILTFSLFSQG) form the signal peptide.

It belongs to the melanin-concentrating hormone family.

Its subcellular location is the secreted. This Hylobates lar (Lar gibbon) protein is Pro-MCH (PMCH).